The chain runs to 220 residues: MIVQHKTAKIEEDHGLFQPILRPSDISKTTDTKFIQSSPYIEKEHWLDLGTLSVGHYFLSLALQTFVPKDSVRYAHLPYAQAFDIAEIVNLIREYSHKYHKHIPAFSAYIVAFRSVLQPEVQVSPEARHKLAEIDKGSHLEANVSGGLLKYWYGIPDDVFGQNLATCWWTSKESARLGGAGKIHREGLKAVRGWYKNWKIEEYELEVIEGGSSYIFKGLS.

Belongs to the UPF0643 family.

Its subcellular location is the cytoplasm. It localises to the nucleus. The protein is UPF0643 protein PB2B2.08 of Schizosaccharomyces pombe (strain 972 / ATCC 24843) (Fission yeast).